The primary structure comprises 306 residues: Pantothenate kinase (306 aa).

91–98 is an ATP binding site; sequence GSVAVGKS.

Belongs to the prokaryotic pantothenate kinase family.

The protein localises to the cytoplasm. The catalysed reaction is (R)-pantothenate + ATP = (R)-4'-phosphopantothenate + ADP + H(+). It functions in the pathway cofactor biosynthesis; coenzyme A biosynthesis; CoA from (R)-pantothenate: step 1/5. This Streptococcus equi subsp. equi (strain 4047) protein is Pantothenate kinase.